The following is a 402-amino-acid chain: MNGGVQTWTQPRLCYLVKEGGSHGFSLKTVQGKKGVYMTDITPQGVAMRAGVLADDHLIEVNGENVEDASHEEVVEKVKKSGSRVMFLLVDKETDKRHVEQKIQFKRETASLKLLPHQPRIVEMKKGSNGYGFYLRAGSEQKGWGRVGQIIKDIDSGSPAEEAGLKNNDLVVAVNGESVETLDHDSVVEMIRKGGDQTSLLVVDKETDNMYRLAHFSPFLYYQSQELPNGSVKEAPAPTPTSLEVSSPPDTTEEEDHKPKLCRLAKGENGYGFHLNAIRGLPGSFIKEVQKGGPADLAGLEDEDVIIEVNGVNVLDEPYEKVVDRIQSSGKNVTLLVCGKKAYDYFQAKKIPIVSSLADPLDTPPDSKEGIVVESKHDSHMAKERAHSTASHSSSNSEDTEM.

PDZ domains are found at residues 12-93 (RLCY…VDKE) and 121-206 (IVEM…VDKE). The interval 230–258 (GSVKEAPAPTPTSLEVSSPPDTTEEEDHK) is disordered. The span at 240-250 (PTSLEVSSPPD) shows a compositional bias: polar residues. Residues 261–341 (LCRLAKGENG…NVTLLVCGKK (81 aa)) enclose the PDZ 3 domain. Residues 362 to 402 (DTPPDSKEGIVVESKHDSHMAKERAHSTASHSSSNSEDTEM) form a disordered region. Basic and acidic residues predominate over residues 365-387 (PDSKEGIVVESKHDSHMAKERAH). Residues 388 to 402 (STASHSSSNSEDTEM) show a composition bias toward low complexity.

Belongs to the NHER family.

The polypeptide is Putative PDZ domain-containing protein PDZK1P1 (Homo sapiens (Human)).